Reading from the N-terminus, the 138-residue chain is Large ribosomal subunit protein uL14 (138 aa).

This sequence belongs to the universal ribosomal protein uL14 family. Part of the 50S ribosomal subunit. Forms a cluster with proteins L3 and L24e, part of which may contact the 16S rRNA in 2 intersubunit bridges.

Functionally, binds to 23S rRNA. Forms part of two intersubunit bridges in the 70S ribosome. This is Large ribosomal subunit protein uL14 from Sulfurisphaera tokodaii (strain DSM 16993 / JCM 10545 / NBRC 100140 / 7) (Sulfolobus tokodaii).